The primary structure comprises 474 residues: tRNA-2-methylthio-N(6)-dimethylallyladenosine synthase (474 aa).

Residues 3–120 (KKLHIKTWGC…LPDMIEQVRR (118 aa)) enclose the MTTase N-terminal domain. [4Fe-4S] cluster-binding residues include Cys-12, Cys-49, Cys-83, Cys-157, Cys-161, and Cys-164. The Radical SAM core domain maps to 143-375 (RAEGPTAFVS…QDRITQQAMR (233 aa)). In terms of domain architecture, TRAM spans 378–441 (RHMMGTVQRI…TNSLRGKFIR (64 aa)).

The protein belongs to the methylthiotransferase family. MiaB subfamily. As to quaternary structure, monomer. [4Fe-4S] cluster is required as a cofactor.

The protein resides in the cytoplasm. The enzyme catalyses N(6)-dimethylallyladenosine(37) in tRNA + (sulfur carrier)-SH + AH2 + 2 S-adenosyl-L-methionine = 2-methylsulfanyl-N(6)-dimethylallyladenosine(37) in tRNA + (sulfur carrier)-H + 5'-deoxyadenosine + L-methionine + A + S-adenosyl-L-homocysteine + 2 H(+). Its function is as follows. Catalyzes the methylthiolation of N6-(dimethylallyl)adenosine (i(6)A), leading to the formation of 2-methylthio-N6-(dimethylallyl)adenosine (ms(2)i(6)A) at position 37 in tRNAs that read codons beginning with uridine. This chain is tRNA-2-methylthio-N(6)-dimethylallyladenosine synthase, found in Shewanella sp. (strain W3-18-1).